A 116-amino-acid chain; its full sequence is Ferredoxin-like protein in nif region (116 aa).

In terms of domain architecture, 4Fe-4S ferredoxin-type spans 2–29; that stretch reads AYTITSQCISCKLCSSVCPTGAIKIAEN. Iron-sulfur cluster-binding residues include cysteine 9, cysteine 12, cysteine 15, and cysteine 19.

The chain is Ferredoxin-like protein in nif region (fdxN) from Nostoc sp. (strain PCC 7120 / SAG 25.82 / UTEX 2576).